The following is a 911-amino-acid chain: MDTCGVGYVALGEAGPVGNMTVVDSPGQEVLNQLDVKTSSEMTSAEASIEMSLPTPLPGFEDSPDQRRLPPEQESLSRLEQQDLSSEMSKVSKPRASKPGRKRGGRTRKGPKRPQQPNPPSAPLVPGLLDQSNPLSTPMPKKRGRKSKAELLLLKLSKDLDRPESQSPKRPPEDFETPSGERPRRRAAQVALLYLQELAEELSTALPAPVSCPEGPKVSSPTKPKKIRQPAACPGGEEVDGAPRDEDFFLQVEAEDVEESEGPSESSSEPEPAVPRSTPRGSTSGKQKPHCRGMAPNGLPNHIMAPVWKCLHLTKDFREQKHSYWEFAEWIPLAWKWHLLSELEAAPYLPQEEKSPLFSVQREGLPEDGTLYRINRFSSITAHPERWDVSFFTGGPLWALDWCPVPEGAGASQYVALFSSPDMNETHPLSQLHSGPGLLQLWGLGTLQQESCPGNRAHFVYGIACDNGCIWDLKFCPSGAWELPGTPRKAPLLPRLGLLALACSDGKVLLFSLPHPEALLAQQPPDAVKPAIYKVQCVATLQVGSMQATDPSECGQCLSLAWMPTRPHQHLAAGYYNGMVVFWNLPTNSPLQRIRLSDGSLKLYPFQCFLAHDQAVRTLQWCKANSHFLASAGSDRKIKFWDLRRPYEPINSIKRFLSTELAWLLPYNGVTVAQDNCYASYGLCGIHYIDAGYLGFKAYFTAPRKGTVWSLSGSDWLGTIAAGDISGELIAAILPDMALNPINVKRPVERRFPIYKADLIPYQDSPEGPDHSSASSGVPNPPKARTYTETVNHHYLLFQDTDLGSFHDLLRREPMLRMQEGEGHSQLCLDRLQLEAIHKVRFSPNLDSYGWLVSGGQSGLVRIHFVRGLASPLGHRMQLESRAHFNAMFQPSSPTRRPGFSPTSHRLLPTP.

2 disordered regions span residues 34–187 (LDVK…RRRA) and 205–297 (ALPA…MAPN). A compositionally biased stretch (polar residues) spans 35-46 (DVKTSSEMTSAE). Residue S63 is modified to Phosphoserine. Residues 64–81 (PDQRRLPPEQESLSRLEQ) are compositionally biased toward basic and acidic residues. Positions 92-112 (SKPRASKPGRKRGGRTRKGPK) are enriched in basic residues. Positions 114 to 123 (PQQPNPPSAP) are enriched in pro residues. S132, S165, S167, S220, and S260 each carry phosphoserine. The span at 253-262 (EAEDVEESEG) shows a compositional bias: acidic residues. The segment covering 263–275 (PSESSSEPEPAVP) has biased composition (low complexity). 2 WD repeats span residues 465–521 (CDNG…ALLA) and 552–593 (SECG…PLQR). Residue S597 is modified to Phosphoserine. A WD 3 repeat occupies 611-651 (AHDQAVRTLQWCKANSHFLASAGSDRKIKFWDLRRPYEPIN). Residues 765–785 (SPEGPDHSSASSGVPNPPKAR) are disordered. The WD 4 repeat unit spans residues 832-874 (LQLEAIHKVRFSPNLDSYGWLVSGGQSGLVRIHFVRGLASPLG). Phosphoserine occurs at positions 871, 892, and 893. The segment at 889–911 (FQPSSPTRRPGFSPTSHRLLPTP) is disordered. At T895 the chain carries Phosphothreonine. Position 901 is a phosphoserine (S901).

As to quaternary structure, part of the TFIIIC subcomplex TFIIIC2, consisting of six subunits, GTF3C1, GTF3C2, GTF3C3, GTF3C4, GTF3C5 and GTF3C6.

It is found in the nucleus. Functionally, required for RNA polymerase III-mediated transcription. Component of TFIIIC that initiates transcription complex assembly on tRNA and is required for transcription of 5S rRNA and other stable nuclear and cytoplasmic RNAs. May play a direct role in stabilizing interactions of TFIIIC2 with TFIIIC1. The chain is General transcription factor 3C polypeptide 2 (GTF3C2) from Pongo abelii (Sumatran orangutan).